A 251-amino-acid chain; its full sequence is Cell division protein ZapD (251 aa).

It belongs to the ZapD family. Interacts with FtsZ.

Its subcellular location is the cytoplasm. Its function is as follows. Cell division factor that enhances FtsZ-ring assembly. Directly interacts with FtsZ and promotes bundling of FtsZ protofilaments, with a reduction in FtsZ GTPase activity. The chain is Cell division protein ZapD from Burkholderia vietnamiensis (strain G4 / LMG 22486) (Burkholderia cepacia (strain R1808)).